Consider the following 124-residue polypeptide: Large ribosomal subunit protein bL12 (124 aa).

Over residues 102–116 (MSKEDAEAAKTKLEE) the composition is skewed to basic and acidic residues. Residues 102–124 (MSKEDAEAAKTKLEEAGASVELK) are disordered.

Belongs to the bacterial ribosomal protein bL12 family. In terms of assembly, homodimer. Part of the ribosomal stalk of the 50S ribosomal subunit. Forms a multimeric L10(L12)X complex, where L10 forms an elongated spine to which 2 to 4 L12 dimers bind in a sequential fashion. Binds GTP-bound translation factors.

Functionally, forms part of the ribosomal stalk which helps the ribosome interact with GTP-bound translation factors. Is thus essential for accurate translation. The sequence is that of Large ribosomal subunit protein bL12 from Chromohalobacter salexigens (strain ATCC BAA-138 / DSM 3043 / CIP 106854 / NCIMB 13768 / 1H11).